The sequence spans 98 residues: NADH-ubiquinone oxidoreductase chain 4L (98 aa).

3 helical membrane passes run 2–22, 29–49, and 61–81; these read PSIS…MLMF, SLLC…LTIL, and ILLL…LVMV.

This sequence belongs to the complex I subunit 4L family. In terms of assembly, core subunit of respiratory chain NADH dehydrogenase (Complex I) which is composed of 45 different subunits.

The protein resides in the mitochondrion inner membrane. The catalysed reaction is a ubiquinone + NADH + 5 H(+)(in) = a ubiquinol + NAD(+) + 4 H(+)(out). In terms of biological role, core subunit of the mitochondrial membrane respiratory chain NADH dehydrogenase (Complex I) which catalyzes electron transfer from NADH through the respiratory chain, using ubiquinone as an electron acceptor. Part of the enzyme membrane arm which is embedded in the lipid bilayer and involved in proton translocation. This Microcebus mittermeieri (Mittermeier's mouse lemur) protein is NADH-ubiquinone oxidoreductase chain 4L (MT-ND4L).